A 21-amino-acid polypeptide reads, in one-letter code: uncharacterized protein (21 aa).

This is an uncharacterized protein from Escherichia coli (strain K12).